The following is a 1109-amino-acid chain: Protein translocase subunit SecA (1109 aa).

ATP contacts are provided by residues glutamine 175, glycine 193–threonine 197, and aspartate 695. Positions valine 1038–serine 1109 are disordered. Basic and acidic residues-rich tracts occupy residues glutamine 1045 to leucine 1059 and aspartate 1071 to glycine 1088. Zn(2+)-binding residues include cysteine 1093, cysteine 1095, cysteine 1104, and histidine 1105. Positions lysine 1099 to serine 1109 are enriched in basic residues.

It belongs to the SecA family. In terms of assembly, monomer and homodimer. Part of the essential Sec protein translocation apparatus which comprises SecA, SecYEG and auxiliary proteins SecDF. Other proteins may also be involved. Zn(2+) is required as a cofactor.

The protein resides in the cell inner membrane. Its subcellular location is the cytoplasm. It catalyses the reaction ATP + H2O + cellular proteinSide 1 = ADP + phosphate + cellular proteinSide 2.. Part of the Sec protein translocase complex. Interacts with the SecYEG preprotein conducting channel. Has a central role in coupling the hydrolysis of ATP to the transfer of proteins into and across the cell membrane, serving as an ATP-driven molecular motor driving the stepwise translocation of polypeptide chains across the membrane. The sequence is that of Protein translocase subunit SecA from Bacteroides fragilis (strain ATCC 25285 / DSM 2151 / CCUG 4856 / JCM 11019 / LMG 10263 / NCTC 9343 / Onslow / VPI 2553 / EN-2).